A 79-amino-acid chain; its full sequence is Cell division protein ZapB (79 aa).

A coiled-coil region spans residues 3–79 (LEVFEKLEAK…QALLGRMEEV (77 aa)).

Belongs to the ZapB family. Homodimer. The ends of the coiled-coil dimer bind to each other, forming polymers. Interacts with FtsZ.

The protein localises to the cytoplasm. Functionally, non-essential, abundant cell division factor that is required for proper Z-ring formation. It is recruited early to the divisome by direct interaction with FtsZ, stimulating Z-ring assembly and thereby promoting cell division earlier in the cell cycle. Its recruitment to the Z-ring requires functional FtsA or ZipA. In Salmonella typhi, this protein is Cell division protein ZapB.